The chain runs to 486 residues: tRNA-2-methylthio-N(6)-dimethylallyladenosine synthase (486 aa).

Residues 35-151 (RNLYVESYGC…LPRLLATVDS (117 aa)) form the MTTase N-terminal domain. [4Fe-4S] cluster contacts are provided by Cys-44, Cys-80, Cys-114, Cys-189, Cys-193, and Cys-196. A Radical SAM core domain is found at 175 to 419 (NSNGVSAFIS…IDKQRQHSFE (245 aa)). The 64-residue stretch at 422–485 (LKDIGKVYQV…TGTLLGEICT (64 aa)) folds into the TRAM domain.

The protein belongs to the methylthiotransferase family. MiaB subfamily. Monomer. [4Fe-4S] cluster is required as a cofactor.

The protein localises to the cytoplasm. The enzyme catalyses N(6)-dimethylallyladenosine(37) in tRNA + (sulfur carrier)-SH + AH2 + 2 S-adenosyl-L-methionine = 2-methylsulfanyl-N(6)-dimethylallyladenosine(37) in tRNA + (sulfur carrier)-H + 5'-deoxyadenosine + L-methionine + A + S-adenosyl-L-homocysteine + 2 H(+). In terms of biological role, catalyzes the methylthiolation of N6-(dimethylallyl)adenosine (i(6)A), leading to the formation of 2-methylthio-N6-(dimethylallyl)adenosine (ms(2)i(6)A) at position 37 in tRNAs that read codons beginning with uridine. The sequence is that of tRNA-2-methylthio-N(6)-dimethylallyladenosine synthase from Amoebophilus asiaticus (strain 5a2).